The following is a 279-amino-acid chain: Putative biopolymer transport protein ExbB homolog (279 aa).

3 helical membrane passes run 19 to 39 (SGGVITYLIAAIGIYGFITAL), 126 to 146 (IIEVAPMLGLIGTVIGIWYTF), and 162 to 182 (IYVALITTILGLAVAIILMPL).

Belongs to the ExbB/TolQ family.

It localises to the cell membrane. The sequence is that of Putative biopolymer transport protein ExbB homolog from Methanothermobacter thermautotrophicus (strain ATCC 29096 / DSM 1053 / JCM 10044 / NBRC 100330 / Delta H) (Methanobacterium thermoautotrophicum).